Consider the following 135-residue polypeptide: Protein NrdI (135 aa).

Belongs to the NrdI family.

Functionally, probably involved in ribonucleotide reductase function. The polypeptide is Protein NrdI (Salmonella gallinarum (strain 287/91 / NCTC 13346)).